The following is a 255-amino-acid chain: 1-acyl-sn-glycerol-3-phosphate acyltransferase (255 aa).

An HXXXXD motif motif is present at residues His78–Asp83.

This sequence belongs to the 1-acyl-sn-glycerol-3-phosphate acyltransferase family.

The protein resides in the cell inner membrane. The catalysed reaction is a 1-acyl-sn-glycero-3-phosphate + an acyl-CoA = a 1,2-diacyl-sn-glycero-3-phosphate + CoA. The protein operates within phospholipid metabolism; CDP-diacylglycerol biosynthesis; CDP-diacylglycerol from sn-glycerol 3-phosphate: step 2/3. Its function is as follows. Converts lysophosphatidic acid (LPA) into phosphatidic acid by incorporating acyl moiety at the 2 position. In Neisseria meningitidis serogroup B (strain ATCC BAA-335 / MC58), this protein is 1-acyl-sn-glycerol-3-phosphate acyltransferase (plsC).